A 343-amino-acid polypeptide reads, in one-letter code: Dual-specificity RNA methyltransferase RlmN (343 aa).

The active-site Proton acceptor is the Glu-92. The 228-residue stretch at 98 to 325 (DEDRTTLCIS…VITRSSRGSD (228 aa)) folds into the Radical SAM core domain. The cysteines at positions 105 and 330 are disulfide-linked. The [4Fe-4S] cluster site is built by Cys-112, Cys-116, and Cys-119. Residues 157–158 (GE), Ser-189, 211–213 (SLN), and Asn-287 each bind S-adenosyl-L-methionine. Residue Cys-330 is the S-methylcysteine intermediate of the active site.

It belongs to the radical SAM superfamily. RlmN family. The cofactor is [4Fe-4S] cluster.

The protein localises to the cytoplasm. The catalysed reaction is adenosine(2503) in 23S rRNA + 2 reduced [2Fe-2S]-[ferredoxin] + 2 S-adenosyl-L-methionine = 2-methyladenosine(2503) in 23S rRNA + 5'-deoxyadenosine + L-methionine + 2 oxidized [2Fe-2S]-[ferredoxin] + S-adenosyl-L-homocysteine. It catalyses the reaction adenosine(37) in tRNA + 2 reduced [2Fe-2S]-[ferredoxin] + 2 S-adenosyl-L-methionine = 2-methyladenosine(37) in tRNA + 5'-deoxyadenosine + L-methionine + 2 oxidized [2Fe-2S]-[ferredoxin] + S-adenosyl-L-homocysteine. Its function is as follows. Specifically methylates position 2 of adenine 2503 in 23S rRNA and position 2 of adenine 37 in tRNAs. m2A2503 modification seems to play a crucial role in the proofreading step occurring at the peptidyl transferase center and thus would serve to optimize ribosomal fidelity. The sequence is that of Dual-specificity RNA methyltransferase RlmN from Geotalea uraniireducens (strain Rf4) (Geobacter uraniireducens).